The following is a 213-amino-acid chain: Protein-L-isoaspartate O-methyltransferase (213 aa).

Ser-64 is a catalytic residue.

The protein belongs to the methyltransferase superfamily. L-isoaspartyl/D-aspartyl protein methyltransferase family.

Its subcellular location is the cytoplasm. The catalysed reaction is [protein]-L-isoaspartate + S-adenosyl-L-methionine = [protein]-L-isoaspartate alpha-methyl ester + S-adenosyl-L-homocysteine. In terms of biological role, catalyzes the methyl esterification of L-isoaspartyl residues in peptides and proteins that result from spontaneous decomposition of normal L-aspartyl and L-asparaginyl residues. It plays a role in the repair and/or degradation of damaged proteins. The polypeptide is Protein-L-isoaspartate O-methyltransferase (Christiangramia forsetii (strain DSM 17595 / CGMCC 1.15422 / KT0803) (Gramella forsetii)).